The primary structure comprises 201 residues: MARYTGPATRKSRRLRVDLVGGDMAFERRPYPPGQAGRARIKESEYLLQLQEKQKARFIYGVMEKQFRRYYAEANRRPGKTGENLVVMLESRLDNVVYRAGLARTRRQARQLVSHGHFVVNGKAVDVPSFRVSQYDIIDVREKSQKMNWFEEAQDNLVDAIVPAWLQVVPSTLRILVHQLPERAQIDIPLQEQLIVEFYSK.

The S4 RNA-binding domain maps to 91-151; sequence SRLDNVVYRA…EKSQKMNWFE (61 aa).

Belongs to the universal ribosomal protein uS4 family. In terms of assembly, part of the 30S ribosomal subunit. Contacts protein S5. The interaction surface between S4 and S5 is involved in control of translational fidelity.

In terms of biological role, one of the primary rRNA binding proteins, it binds directly to 16S rRNA where it nucleates assembly of the body of the 30S subunit. Its function is as follows. With S5 and S12 plays an important role in translational accuracy. The polypeptide is Small ribosomal subunit protein uS4 (Corynebacterium efficiens (strain DSM 44549 / YS-314 / AJ 12310 / JCM 11189 / NBRC 100395)).